The sequence spans 227 residues: Enolase-phosphatase E1 (227 aa).

This sequence belongs to the HAD-like hydrolase superfamily. MasA/MtnC family. Monomer. Mg(2+) is required as a cofactor.

It catalyses the reaction 5-methylsulfanyl-2,3-dioxopentyl phosphate + H2O = 1,2-dihydroxy-5-(methylsulfanyl)pent-1-en-3-one + phosphate. The protein operates within amino-acid biosynthesis; L-methionine biosynthesis via salvage pathway; L-methionine from S-methyl-5-thio-alpha-D-ribose 1-phosphate: step 3/6. It functions in the pathway amino-acid biosynthesis; L-methionine biosynthesis via salvage pathway; L-methionine from S-methyl-5-thio-alpha-D-ribose 1-phosphate: step 4/6. Functionally, bifunctional enzyme that catalyzes the enolization of 2,3-diketo-5-methylthiopentyl-1-phosphate (DK-MTP-1-P) into the intermediate 2-hydroxy-3-keto-5-methylthiopentenyl-1-phosphate (HK-MTPenyl-1-P), which is then dephosphorylated to form the acireductone 1,2-dihydroxy-3-keto-5-methylthiopentene (DHK-MTPene). The polypeptide is Enolase-phosphatase E1 (Gluconobacter oxydans (strain 621H) (Gluconobacter suboxydans)).